The following is a 476-amino-acid chain: Inosine-5'-monophosphate dehydrogenase (476 aa).

CBS domains lie at 93 to 151 (IIRD…VKDI) and 152 to 211 (MTKD…TRDE). Residues aspartate 242 and 292-294 (GIG) contribute to the NAD(+) site. Residues glycine 294 and glycine 296 each coordinate K(+). Residue serine 297 coordinates IMP. Residue cysteine 299 coordinates K(+). The Thioimidate intermediate role is filled by cysteine 299. Residues 334–336 (DGG), 357–358 (GY), and 381–385 (YRGMG) contribute to the IMP site. Residue arginine 398 is the Proton acceptor of the active site. Glutamate 408 is a binding site for IMP. Position 462 (glutamate 462) interacts with K(+).

The protein belongs to the IMPDH/GMPR family. In terms of assembly, homotetramer. K(+) is required as a cofactor.

The enzyme catalyses IMP + NAD(+) + H2O = XMP + NADH + H(+). Its pathway is purine metabolism; XMP biosynthesis via de novo pathway; XMP from IMP: step 1/1. Mycophenolic acid (MPA) is a non-competitive inhibitor that prevents formation of the closed enzyme conformation by binding to the same site as the amobile flap. In contrast, mizoribine monophosphate (MZP) is a competitive inhibitor that induces the closed conformation. MPA is a potent inhibitor of mammalian IMPDHs but a poor inhibitor of the bacterial enzymes. MZP is a more potent inhibitor of bacterial IMPDH. Functionally, catalyzes the conversion of inosine 5'-phosphate (IMP) to xanthosine 5'-phosphate (XMP), the first committed and rate-limiting step in the de novo synthesis of guanine nucleotides, and therefore plays an important role in the regulation of cell growth. In Korarchaeum cryptofilum (strain OPF8), this protein is Inosine-5'-monophosphate dehydrogenase.